A 269-amino-acid polypeptide reads, in one-letter code: Senescence-associated protein 13 (269 aa).

21 to 45 (LVTGGSKGIGEAVVEELAMLGAKVH) serves as a coordination point for NADP(+). Serine 154 serves as a coordination point for substrate. The Proton acceptor role is filled by tyrosine 167.

The protein belongs to the short-chain dehydrogenases/reductases (SDR) family. SDR65C subfamily.

Unspecific reductase providing both diastereomeric alcohols from the prochiral ketones. Active on cyclic monoterpenes and small flexible lipophilic carbonyls. No activity with tropinone, nitrogen-containing tropinone analogs, tropine or pseudotropine as substrate. This chain is Senescence-associated protein 13, found in Arabidopsis thaliana (Mouse-ear cress).